Consider the following 602-residue polypeptide: Alpha-glucosides permease MPH3 (602 aa).

Residues 1–106 (MKNLSFLINR…AAAWSLLVST (106 aa)) lie on the Cytoplasmic side of the membrane. Residues 107-127 (TLIMEGYDTAILGAFYALPIF) traverse the membrane as a helical segment. Over 128–142 (QRKFGSQNDKTGEWE) the chain is Extracellular. Residues 143–163 (ISASWQIGLTLCYMAGEIVGL) form a helical membrane-spanning segment. The Cytoplasmic portion of the chain corresponds to 164–178 (QLTGPSVDLVGNRYT). The helical transmembrane segment at 179–199 (LIIALFFLAAFTFILYFCNSL) threads the bilayer. Residue glycine 200 is a topological domain, extracellular. A helical membrane pass occupies residues 201–221 (MIAVGQALCGMPWGCFQCLTV). Over 222-234 (SYASEICPLALRY) the chain is Cytoplasmic. Residues 235–255 (YLTTYSNLCWLFGQLFAAGIM) traverse the membrane as a helical segment. Residues 256–270 (KNSQKKYADSELGYK) are Extracellular-facing. The chain crosses the membrane as a helical span at residues 271–291 (LPFALQWILPVPLALGIFFAP). At 292 to 363 (ESPWWLVKKG…EDKINRRRTR (72 aa)) the chain is on the cytoplasmic side. The helical transmembrane segment at 364–384 (ITCLCWAGQATCGSILIGYST) threads the bilayer. Residues 385 to 397 (YFYEKAGVSTEMS) lie on the Extracellular side of the membrane. Residues 398–418 (FTFSIIQYCLGICATFLSWWA) traverse the membrane as a helical segment. At 419–426 (SKYFGRYD) the chain is on the cytoplasmic side. A helical membrane pass occupies residues 427 to 447 (LYAFGLAFQTIVFFIIGGLGC). At 448–459 (SSTHGSKMGSGS) the chain is on the extracellular side. Residues 460 to 480 (LLMAVAFFYNLGIAPVVFCLV) form a helical membrane-spanning segment. The Cytoplasmic segment spans residues 481–492 (SEMPSSRLRTKT). A helical transmembrane segment spans residues 493-513 (IILARNTYNVVSIICSVLILY). Over 514 to 525 (QLNSKKWNWGAK) the chain is Extracellular. A helical membrane pass occupies residues 526–546 (SGFFWGVLCFCTLIWAVVDLP). Residues 547–602 (ETAGKTFVEINELFKLGVSARKFKSTKVDPFVVKNPPKDVSHNDPKGDIEASIAEE) are Cytoplasmic-facing. A disordered region spans residues 580 to 602 (KNPPKDVSHNDPKGDIEASIAEE). The segment covering 582 to 595 (PPKDVSHNDPKGDI) has biased composition (basic and acidic residues).

It belongs to the major facilitator superfamily. Sugar transporter (TC 2.A.1.1) family.

It localises to the cell membrane. High-affinity uptake of maltose and maltotriose. Also transports alpha-methylglucoside, glucose and turanose but not melezitose or trehalose. The sequence is that of Alpha-glucosides permease MPH3 (MPH3) from Saccharomyces cerevisiae (strain AWRI1631) (Baker's yeast).